We begin with the raw amino-acid sequence, 177 residues long: B-phycoerythrin beta chain (177 aa).

Phycourobilin-binding residues include Cys-50 and Cys-61. Residue Asn-72 is modified to N4-methylasparagine. Cys-82 and Cys-158 together coordinate (2R,3E)-phycoerythrobilin.

It belongs to the phycobiliprotein family. Heteromer of 6 alpha, 6 beta and one gamma chain. Post-translationally, contains two covalently linked phycoerythrobilin chromophores and one covalently linked phycourobilin chromophore.

The protein localises to the plastid. It localises to the chloroplast thylakoid membrane. In terms of biological role, light-harvesting photosynthetic bile pigment-protein from the phycobiliprotein complex. This Porphyridium sordidum (Red alga) protein is B-phycoerythrin beta chain (cpeB).